The primary structure comprises 230 residues: Lactate utilization protein C (230 aa).

It belongs to the LutC/YkgG family.

Its function is as follows. Is involved in L-lactate degradation and allows cells to grow with lactate as the sole carbon source. The protein is Lactate utilization protein C of Halalkalibacterium halodurans (strain ATCC BAA-125 / DSM 18197 / FERM 7344 / JCM 9153 / C-125) (Bacillus halodurans).